A 265-amino-acid polypeptide reads, in one-letter code: Anamorsin homolog (265 aa).

Residues Met-1 to Lys-147 form an N-terminal SAM-like domain region. Positions Lys-147 to Leu-176 are linker. Residues Cys-186, Cys-195, Cys-198, and Cys-200 each contribute to the [2Fe-2S] cluster site. The tract at residues Cys-186–Cys-200 is fe-S binding site A. [4Fe-4S] cluster is bound by residues Cys-226, Cys-229, Cys-237, and Cys-240. 2 short sequence motifs (cx2C motif) span residues Cys-226–Cys-229 and Cys-237–Cys-240. The fe-S binding site B stretch occupies residues Cys-226 to Cys-240.

It belongs to the anamorsin family. Monomer. It depends on [2Fe-2S] cluster as a cofactor. The cofactor is [4Fe-4S] cluster.

The protein localises to the cytoplasm. It localises to the mitochondrion intermembrane space. In terms of biological role, component of the cytosolic iron-sulfur (Fe-S) protein assembly (CIA) machinery. Required for the maturation of extramitochondrial Fe-S proteins. Part of an electron transfer chain functioning in an early step of cytosolic Fe-S biogenesis, facilitating the de novo assembly of a [4Fe-4S] cluster on the cytosolic Fe-S scaffold complex. Electrons are transferred from NADPH via a FAD- and FMN-containing diflavin oxidoreductase. Together with the diflavin oxidoreductase, also required for the assembly of the diferric tyrosyl radical cofactor of ribonucleotide reductase (RNR), probably by providing electrons for reduction during radical cofactor maturation in the catalytic small subunit. In Medicago truncatula (Barrel medic), this protein is Anamorsin homolog.